Reading from the N-terminus, the 314-residue chain is tRNA dimethylallyltransferase (314 aa).

Position 11-18 (11-18) interacts with ATP; it reads GPTASGKT. A substrate-binding site is contributed by 13 to 18; it reads TASGKT. Interaction with substrate tRNA regions lie at residues 36–39, 160–164, 241–246, and 274–281; these read DSAL, QRINR, RCVGYR, and KRQITWLR.

Belongs to the IPP transferase family. As to quaternary structure, monomer. The cofactor is Mg(2+).

The enzyme catalyses adenosine(37) in tRNA + dimethylallyl diphosphate = N(6)-dimethylallyladenosine(37) in tRNA + diphosphate. Its function is as follows. Catalyzes the transfer of a dimethylallyl group onto the adenine at position 37 in tRNAs that read codons beginning with uridine, leading to the formation of N6-(dimethylallyl)adenosine (i(6)A). This is tRNA dimethylallyltransferase from Glaesserella parasuis serovar 5 (strain SH0165) (Haemophilus parasuis).